A 67-amino-acid chain; its full sequence is Mu-conotoxin TsIIIA (67 aa).

The signal sequence occupies residues M1–A20. The propeptide occupies V21–R48. Cystine bridges form between C50–C59, C51–C64, and C55–C65.

It belongs to the conotoxin M superfamily. In terms of tissue distribution, expressed by the venom duct.

The protein localises to the secreted. Its function is as follows. Mu-conotoxins block voltage-gated sodium channels (Nav). This toxin specifically inhibits mammalian Nav1.8/SCN10A sodium currents (IC(50)=2.11 uM) without inducing a shift in the current-voltage relationship of this channel. In vivo, shows potent analgesic activity in a mice hotplate analgesic assay. In addition, this toxin has better analgesic effects than Ziconotide, an analgesic drug. The sequence is that of Mu-conotoxin TsIIIA from Conus tessulatus (Tessellate cone).